Here is a 311-residue protein sequence, read N- to C-terminus: Nod factor export ATP-binding protein I (311 aa).

The 231-residue stretch at 13-243 (IDLAGVSKSY…QIGCPVIEIY (231 aa)) folds into the ABC transporter domain. An ATP-binding site is contributed by 45 to 52 (GPNGAGKS).

This sequence belongs to the ABC transporter superfamily. Lipooligosaccharide exporter (TC 3.A.1.102) family. As to quaternary structure, the complex is composed of two ATP-binding proteins (NodI) and two transmembrane proteins (NodJ).

It is found in the cell inner membrane. Part of the ABC transporter complex NodIJ involved in the export of the nodulation factors (Nod factors), the bacterial signal molecules that induce symbiosis and subsequent nodulation induction. Nod factors are LCO (lipo-chitin oligosaccharide), a modified beta-1,4-linked N-acetylglucosamine oligosaccharide. This subunit is responsible for energy coupling to the transport system. The sequence is that of Nod factor export ATP-binding protein I from Rhizobium leguminosarum bv. viciae.